Here is a 328-residue protein sequence, read N- to C-terminus: Tryptophan--tRNA ligase (328 aa).

ATP contacts are provided by residues 11 to 13 (QPT) and 19 to 20 (GN). The 'HIGH' region signature appears at 12 to 20 (PTGNIHLGN). Asp135 is a binding site for L-tryptophan. ATP is bound by residues 147–149 (GED), Ile186, and 195–199 (KMSKS). The short motif at 195–199 (KMSKS) is the 'KMSKS' region element.

It belongs to the class-I aminoacyl-tRNA synthetase family. Homodimer.

It is found in the cytoplasm. The enzyme catalyses tRNA(Trp) + L-tryptophan + ATP = L-tryptophyl-tRNA(Trp) + AMP + diphosphate + H(+). Its function is as follows. Catalyzes the attachment of tryptophan to tRNA(Trp). This is Tryptophan--tRNA ligase from Wolinella succinogenes (strain ATCC 29543 / DSM 1740 / CCUG 13145 / JCM 31913 / LMG 7466 / NCTC 11488 / FDC 602W) (Vibrio succinogenes).